Consider the following 132-residue polypeptide: Large ribosomal subunit protein bL19 (132 aa).

The protein belongs to the bacterial ribosomal protein bL19 family.

This protein is located at the 30S-50S ribosomal subunit interface and may play a role in the structure and function of the aminoacyl-tRNA binding site. The polypeptide is Large ribosomal subunit protein bL19 (Methylobacterium radiotolerans (strain ATCC 27329 / DSM 1819 / JCM 2831 / NBRC 15690 / NCIMB 10815 / 0-1)).